The chain runs to 450 residues: Caspase Dronc (450 aa).

Residues 1–134 (MQPPELEIGM…RTSRKSADIV (134 aa)) constitute a propeptide that is removed on maturation. A CARD domain is found at 64-109 (EKDVRVEQHRRLLLKITQRGPTAYNLLINALRNINCLDAAVLLESV). The interval 114 to 125 (SRPPFISLNERR) is required for binding Diap1. Residues histidine 271 and cysteine 318 contribute to the active site. The propeptide occupies 321–324 (DEYD).

It belongs to the peptidase C14A family. In terms of assembly, interacts (via residues 114-125) with Diap1 (via BIR 2 domain); binding blocks Dronc-mediated cell death. Can form a stable complex with Drice. Rpr, hid and grim can out-compete Dronc for binding Diap1, therefore removing Diap1-mediated ubiquitination. Interacts (via CARD domain) with Dark (via Dark CARD and WD domains); the interaction stimulates Dark oligomerization to form the apoptosome and brings pairs of Dronc molecules together on the apoptosome to facilitate their dimerization and activation by autocatalytic cleavage. Binding to Dark stimulates apoptosome assembly. After autocatalytic cleavage the Dronc caspase domain dissociates from the apoptosome but the CARD domain remains associated. Ubiquitinated by Diap1, leading to its subsequent degradation. In terms of tissue distribution, ubiquitously expressed in embryos during early stages of development. In late third instar larvae, dramatic up-regulation in salivary glands and midgut before histolysis of these tissues.

It is found in the cytoplasm. It catalyses the reaction Strict requirement for an Asp residue at position P1 and with a marked preference for His at position P2. It has a preferred cleavage sequence of Leu-Gly-His-Asp-|-Xaa.. With respect to regulation, zymogen activated by autocatalytic cleavage; association with the Dark apoptosome brings multiple molecules together to facilitate their dimerization and activation by autocatalytic cleavage. Its function is as follows. Involved in the activation cascade of caspases responsible for apoptosis execution. Effector of steroid-mediated apoptosis during insect metamorphosis. Overexpression promotes programmed cell death. Interaction with Diap1 is required to suppress Dronc-mediated cell death; via Diap1-mediated ubiquitination of Dronc. Rate-limiting caspase in rpr, grim and hid death pathway. Recruited to the Dark apoptosome, an adapter protein complex that mediates activation of the caspase cascade in programmed cell death initiated by the intrinsic apoptosis pathway. Association with the Dark apoptosome stimulates autocatalytic cleavage and activation of Dronc, promoting Dronc-mediated cleavage of downstream effector caspases such as Drice. This chain is Caspase Dronc, found in Drosophila melanogaster (Fruit fly).